Consider the following 146-residue polypeptide: Hut operon positive regulatory protein (146 aa).

This sequence belongs to the HutP family. In terms of assembly, homohexamer.

Its function is as follows. Antiterminator that binds to cis-acting regulatory sequences on the mRNA in the presence of histidine, thereby suppressing transcription termination and activating the hut operon for histidine utilization. In Bacillus anthracis (strain CDC 684 / NRRL 3495), this protein is Hut operon positive regulatory protein.